A 448-amino-acid chain; its full sequence is N-succinylarginine dihydrolase (448 aa).

Substrate-binding positions include 19–28, Asn110, and 137–138; these read AGLSSGNIAS and HR. Glu174 is a catalytic residue. A substrate-binding site is contributed by Arg216. His252 is an active-site residue. Residues Asp254 and Asn366 each contribute to the substrate site. Cys372 acts as the Nucleophile in catalysis.

The protein belongs to the succinylarginine dihydrolase family. Homodimer.

The enzyme catalyses N(2)-succinyl-L-arginine + 2 H2O + 2 H(+) = N(2)-succinyl-L-ornithine + 2 NH4(+) + CO2. It participates in amino-acid degradation; L-arginine degradation via AST pathway; L-glutamate and succinate from L-arginine: step 2/5. Catalyzes the hydrolysis of N(2)-succinylarginine into N(2)-succinylornithine, ammonia and CO(2). In Legionella pneumophila (strain Lens), this protein is N-succinylarginine dihydrolase.